Here is a 131-residue protein sequence, read N- to C-terminus: Methylglyoxal synthase (131 aa).

The MGS-like domain occupies 1–131 (MKIALIAHDK…GDLDYRKLRK (131 aa)). Substrate-binding positions include H8, K12, 34–37 (TGTT), and 54–55 (SG). D60 (proton donor/acceptor) is an active-site residue. H87 lines the substrate pocket.

The protein belongs to the methylglyoxal synthase family.

The catalysed reaction is dihydroxyacetone phosphate = methylglyoxal + phosphate. Catalyzes the formation of methylglyoxal from dihydroxyacetone phosphate. The protein is Methylglyoxal synthase of Bacillus cereus (strain ATCC 10987 / NRS 248).